The chain runs to 162 residues: 2-C-methyl-D-erythritol 2,4-cyclodiphosphate synthase (162 aa).

Residues aspartate 9 and histidine 11 each contribute to the a divalent metal cation site. Residues 9–11 (DVH) and 37–38 (HS) contribute to the 4-CDP-2-C-methyl-D-erythritol 2-phosphate site. Histidine 45 provides a ligand contact to a divalent metal cation.

The protein belongs to the IspF family. As to quaternary structure, homotrimer. It depends on a divalent metal cation as a cofactor.

The catalysed reaction is 4-CDP-2-C-methyl-D-erythritol 2-phosphate = 2-C-methyl-D-erythritol 2,4-cyclic diphosphate + CMP. It functions in the pathway isoprenoid biosynthesis; isopentenyl diphosphate biosynthesis via DXP pathway; isopentenyl diphosphate from 1-deoxy-D-xylulose 5-phosphate: step 4/6. Its function is as follows. Involved in the biosynthesis of isopentenyl diphosphate (IPP) and dimethylallyl diphosphate (DMAPP), two major building blocks of isoprenoid compounds. Catalyzes the conversion of 4-diphosphocytidyl-2-C-methyl-D-erythritol 2-phosphate (CDP-ME2P) to 2-C-methyl-D-erythritol 2,4-cyclodiphosphate (ME-CPP) with a corresponding release of cytidine 5-monophosphate (CMP). The sequence is that of 2-C-methyl-D-erythritol 2,4-cyclodiphosphate synthase from Petrotoga mobilis (strain DSM 10674 / SJ95).